Here is a 249-residue protein sequence, read N- to C-terminus: UPF0758 protein Oant_1909 (249 aa).

In terms of domain architecture, MPN spans 127 to 249; the sequence is VLGSWNKVIE…HASFRGLGLI (123 aa). 3 residues coordinate Zn(2+): histidine 198, histidine 200, and aspartate 211. The JAMM motif signature appears at 198-211; the sequence is HNHPSGDPTPSRAD.

The protein belongs to the UPF0758 family.

The chain is UPF0758 protein Oant_1909 from Brucella anthropi (strain ATCC 49188 / DSM 6882 / CCUG 24695 / JCM 21032 / LMG 3331 / NBRC 15819 / NCTC 12168 / Alc 37) (Ochrobactrum anthropi).